The sequence spans 337 residues: MNTEATHDQNEALTTGARLRNAREQLGLSQQAVAERLCLKVSTVRDIEEDKAPADLASTFLRGYIRSYARLVHIPEEELLPGLEKQAPLRAAKVAPMQSFSLGKRRKKRDGWLMTFTWLVLFVVIGLSGAWWWQDHKAQQEEITTMADQSSAELSSNSEQGQSVPLNTSTTTDPATTSTPPASVDTTATNTQTPAVTAPAPAVDPQQNAVVSPSQANVDTAATPVPTAATTPDGAAPLPTDQAGVTTPAADPNALVMNFTADCWLEVTDATGKKLFSGMQRKDGNLNLTGQAPYKLKIGAPAAVQIQYQGKPVDLSRFIRTNQVARLTLNAEQSPAQ.

The Cytoplasmic segment spans residues 1-111; that stretch reads MNTEATHDQN…LGKRRKKRDG (111 aa). Positions 19 to 71 constitute an HTH cro/C1-type domain; the sequence is LRNAREQLGLSQQAVAERLCLKVSTVRDIEEDKAPADLASTFLRGYIRSYARL. Positions 30–49 form a DNA-binding region, H-T-H motif; sequence QQAVAERLCLKVSTVRDIEE. A helical; Signal-anchor for type II membrane protein transmembrane segment spans residues 112 to 132; that stretch reads WLMTFTWLVLFVVIGLSGAWW. Residues 133–337 are Periplasmic-facing; that stretch reads WQDHKAQQEE…TLNAEQSPAQ (205 aa). The segment covering 145–167 has biased composition (polar residues); sequence TMADQSSAELSSNSEQGQSVPLN. The disordered stretch occupies residues 145–218; it reads TMADQSSAEL…AVVSPSQANV (74 aa). Low complexity predominate over residues 168–207; sequence TSTTTDPATTSTPPASVDTTATNTQTPAVTAPAPAVDPQQ. The segment covering 208–218 has biased composition (polar residues); it reads NAVVSPSQANV.

Belongs to the RodZ family.

The protein resides in the cell inner membrane. Its function is as follows. Cytoskeletal protein that is involved in cell-shape control through regulation of the length of the long axis. This Shigella flexneri serotype 5b (strain 8401) protein is Cytoskeleton protein RodZ.